The following is a 651-amino-acid chain: MSDKIYYVPSEWAQKAYVDDAHYQSMYAASVNDPHAFWGEHGKRIDWFTPYTKVKNTSFDPGHVSIKWFEDGITNVAYNCVDRHLETRGDQVAIIWEGDSPDESRNITYRELSSEVNKLANVLRNRGVEKGDRVTIYLPMIPEAAFAMLACARLGAIHSIVFGGFSPDSLAGRVADCGSKCIITADEGLRGGRKVPLKANVDAAIAQINGGVDHVIVVRRTGGKVDMLPGRDVYYDEATAMVTDECPAEHVNAEDPLFILYTSGSTGKPKGVLHTTGGYLVYASMTHQYIFDYHPGDIYWCTADVGWVTGHSYIVYGPLANGATTLMFEGIPNYPSVSRFWDVIDKHKVNIFYTAPTAIRSLMQAGEEPVKRTSRSSLRLLGSVGEPINPEAWEWYYRVVGEERCPIVDTWWQTETGGILITPLPGATKLKPGSATRPFFGVMPEVVDAEGKVLEGACEGNLVIADSWPGQMRTVYGDHERFEQTYFSTYPGKYFTGDGCRRDADGFYWITGRVDDVINVSGHRMGTAEVESALVAHPKVSEAAVVGFPHDIKGQGIYAYVTLMDGEEPTEELRKELVGWVRREIGPIASPDLIQFAPGLPKTRSGKIMRRILRKIAEDQFESLGDTSTLADPGVVEDLIHNRQNKRDAAA.

CoA-binding positions include 190–193 (RGGR), Thr-309, and Asn-333. ATP contacts are provided by residues 385 to 387 (GEP), 409 to 414 (DTWWQT), Asp-498, and Arg-513. Residue Ser-521 coordinates CoA. An ATP-binding site is contributed by Arg-524. The Mg(2+) site is built by Val-535, His-537, and Val-540. Residue Arg-582 coordinates CoA. N6-acetyllysine is present on Lys-607.

It belongs to the ATP-dependent AMP-binding enzyme family. The cofactor is Mg(2+). Acetylated. Deacetylation by the SIR2-homolog deacetylase activates the enzyme.

The enzyme catalyses acetate + ATP + CoA = acetyl-CoA + AMP + diphosphate. Its function is as follows. Catalyzes the conversion of acetate into acetyl-CoA (AcCoA), an essential intermediate at the junction of anabolic and catabolic pathways. AcsA undergoes a two-step reaction. In the first half reaction, AcsA combines acetate with ATP to form acetyl-adenylate (AcAMP) intermediate. In the second half reaction, it can then transfer the acetyl group from AcAMP to the sulfhydryl group of CoA, forming the product AcCoA. This chain is Acetyl-coenzyme A synthetase, found in Xanthobacter autotrophicus (strain ATCC BAA-1158 / Py2).